We begin with the raw amino-acid sequence, 560 residues long: Proteasome-associated ATPase (560 aa).

A compositionally biased stretch (basic and acidic residues) spans 1–19; that stretch reads MSQQHDDRRPPDTADRDLA. Residues 1–21 are disordered; it reads MSQQHDDRRPPDTADRDLARQ. The stretch at 16-55 forms a coiled coil; that stretch reads RDLARQATSLAEKNERLTAALTAARAQLVEMKAQLEEVSK. 237 to 242 serves as a coordination point for ATP; it reads GCGKTL. The interval 559–560 is docks into pockets in the proteasome alpha-ring; the sequence is YL.

The protein belongs to the AAA ATPase family. In terms of assembly, homohexamer. Assembles into a hexameric ring structure that caps the 20S proteasome core. Strongly interacts with the prokaryotic ubiquitin-like protein Pup through a hydrophobic interface; the interacting region of ARC lies in its N-terminal coiled-coil domain. There is one Pup binding site per ARC hexamer ring. Upon ATP-binding, the C-terminus of ARC interacts with the alpha-rings of the proteasome core, possibly by binding to the intersubunit pockets.

Its pathway is protein degradation; proteasomal Pup-dependent pathway. Functionally, ATPase which is responsible for recognizing, binding, unfolding and translocation of pupylated proteins into the bacterial 20S proteasome core particle. May be essential for opening the gate of the 20S proteasome via an interaction with its C-terminus, thereby allowing substrate entry and access to the site of proteolysis. Thus, the C-termini of the proteasomal ATPase may function like a 'key in a lock' to induce gate opening and therefore regulate proteolysis. In Beutenbergia cavernae (strain ATCC BAA-8 / DSM 12333 / CCUG 43141 / JCM 11478 / NBRC 16432 / NCIMB 13614 / HKI 0122), this protein is Proteasome-associated ATPase.